The following is a 267-amino-acid chain: Membrane-associated protein Vipp1 (267 aa).

Residues 26-156 (EKVLEQAVID…KANAELQQTL (131 aa)) are a coiled coil. The interval 224-252 (GTSAATPQLEAAPVDSSVPANNASQDDAV) is disordered.

It belongs to the PspA/Vipp/IM30 family.

The protein resides in the cell inner membrane. Its function is as follows. Required for thylakoid formation. The protein is Membrane-associated protein Vipp1 of Synechocystis sp. (strain ATCC 27184 / PCC 6803 / Kazusa).